A 116-amino-acid polypeptide reads, in one-letter code: Aspartate 1-decarboxylase (116 aa).

Ser25 serves as the catalytic Schiff-base intermediate with substrate; via pyruvic acid. At Ser25 the chain carries Pyruvic acid (Ser). Thr57 serves as a coordination point for substrate. Tyr58 acts as the Proton donor in catalysis. Residue 73 to 75 (GAA) participates in substrate binding.

This sequence belongs to the PanD family. In terms of assembly, heterooctamer of four alpha and four beta subunits. The cofactor is pyruvate. Post-translationally, is synthesized initially as an inactive proenzyme, which is activated by self-cleavage at a specific serine bond to produce a beta-subunit with a hydroxyl group at its C-terminus and an alpha-subunit with a pyruvoyl group at its N-terminus.

The protein resides in the cytoplasm. It catalyses the reaction L-aspartate + H(+) = beta-alanine + CO2. It participates in cofactor biosynthesis; (R)-pantothenate biosynthesis; beta-alanine from L-aspartate: step 1/1. In terms of biological role, catalyzes the pyruvoyl-dependent decarboxylation of aspartate to produce beta-alanine. The chain is Aspartate 1-decarboxylase from Christiangramia forsetii (strain DSM 17595 / CGMCC 1.15422 / KT0803) (Gramella forsetii).